Consider the following 207-residue polypeptide: uncharacterized protein (207 aa).

This is an uncharacterized protein from Methanocaldococcus jannaschii (strain ATCC 43067 / DSM 2661 / JAL-1 / JCM 10045 / NBRC 100440) (Methanococcus jannaschii).